Reading from the N-terminus, the 280-residue chain is Pantothenate synthetase (280 aa).

31–38 contributes to the ATP binding site; that stretch reads MGNLHVGH. The active-site Proton donor is the His38. A (R)-pantoate-binding site is contributed by Gln62. Residue Gln62 participates in beta-alanine binding. ATP is bound at residue 150-153; that stretch reads GKKD. A (R)-pantoate-binding site is contributed by Gln156. ATP-binding positions include Val179 and 187 to 190; that span reads MSSR.

Belongs to the pantothenate synthetase family. As to quaternary structure, homodimer.

Its subcellular location is the cytoplasm. It carries out the reaction (R)-pantoate + beta-alanine + ATP = (R)-pantothenate + AMP + diphosphate + H(+). The protein operates within cofactor biosynthesis; (R)-pantothenate biosynthesis; (R)-pantothenate from (R)-pantoate and beta-alanine: step 1/1. Catalyzes the condensation of pantoate with beta-alanine in an ATP-dependent reaction via a pantoyl-adenylate intermediate. In Xanthomonas oryzae pv. oryzae (strain MAFF 311018), this protein is Pantothenate synthetase.